Reading from the N-terminus, the 203-residue chain is Imidazoleglycerol-phosphate dehydratase (203 aa).

The protein belongs to the imidazoleglycerol-phosphate dehydratase family.

It is found in the cytoplasm. The catalysed reaction is D-erythro-1-(imidazol-4-yl)glycerol 3-phosphate = 3-(imidazol-4-yl)-2-oxopropyl phosphate + H2O. It functions in the pathway amino-acid biosynthesis; L-histidine biosynthesis; L-histidine from 5-phospho-alpha-D-ribose 1-diphosphate: step 6/9. The polypeptide is Imidazoleglycerol-phosphate dehydratase (Synechococcus sp. (strain RCC307)).